Reading from the N-terminus, the 180-residue chain is Large ribosomal subunit protein uL6 (180 aa).

It belongs to the universal ribosomal protein uL6 family. Part of the 50S ribosomal subunit.

Its function is as follows. This protein binds to the 23S rRNA, and is important in its secondary structure. It is located near the subunit interface in the base of the L7/L12 stalk, and near the tRNA binding site of the peptidyltransferase center. In Prosthecochloris aestuarii (strain DSM 271 / SK 413), this protein is Large ribosomal subunit protein uL6.